The following is a 412-amino-acid chain: Serine hydroxymethyltransferase (412 aa).

Residues Leu117 and 121-123 each bind (6S)-5,6,7,8-tetrahydrofolate; that span reads GHL. Lys226 carries the N6-(pyridoxal phosphate)lysine modification.

It belongs to the SHMT family. In terms of assembly, homodimer. It depends on pyridoxal 5'-phosphate as a cofactor.

The protein localises to the cytoplasm. The enzyme catalyses (6R)-5,10-methylene-5,6,7,8-tetrahydrofolate + glycine + H2O = (6S)-5,6,7,8-tetrahydrofolate + L-serine. It functions in the pathway one-carbon metabolism; tetrahydrofolate interconversion. It participates in amino-acid biosynthesis; glycine biosynthesis; glycine from L-serine: step 1/1. Functionally, catalyzes the reversible interconversion of serine and glycine with tetrahydrofolate (THF) serving as the one-carbon carrier. This reaction serves as the major source of one-carbon groups required for the biosynthesis of purines, thymidylate, methionine, and other important biomolecules. Also exhibits THF-independent aldolase activity toward beta-hydroxyamino acids, producing glycine and aldehydes, via a retro-aldol mechanism. In Staphylococcus haemolyticus (strain JCSC1435), this protein is Serine hydroxymethyltransferase.